A 136-amino-acid chain; its full sequence is 6,7-dimethyl-8-ribityllumazine synthase (136 aa).

5-amino-6-(D-ribitylamino)uracil contacts are provided by residues F11, 43 to 45 (SFD), and 67 to 69 (AVI). 72–73 (ET) serves as a coordination point for (2S)-2-hydroxy-3-oxobutyl phosphate. H75 serves as the catalytic Proton donor. L100 provides a ligand contact to 5-amino-6-(D-ribitylamino)uracil. A (2S)-2-hydroxy-3-oxobutyl phosphate-binding site is contributed by R115.

This sequence belongs to the DMRL synthase family.

It catalyses the reaction (2S)-2-hydroxy-3-oxobutyl phosphate + 5-amino-6-(D-ribitylamino)uracil = 6,7-dimethyl-8-(1-D-ribityl)lumazine + phosphate + 2 H2O + H(+). It functions in the pathway cofactor biosynthesis; riboflavin biosynthesis; riboflavin from 2-hydroxy-3-oxobutyl phosphate and 5-amino-6-(D-ribitylamino)uracil: step 1/2. Its function is as follows. Catalyzes the formation of 6,7-dimethyl-8-ribityllumazine by condensation of 5-amino-6-(D-ribitylamino)uracil with 3,4-dihydroxy-2-butanone 4-phosphate. This is the penultimate step in the biosynthesis of riboflavin. The protein is 6,7-dimethyl-8-ribityllumazine synthase of Picrophilus torridus (strain ATCC 700027 / DSM 9790 / JCM 10055 / NBRC 100828 / KAW 2/3).